Reading from the N-terminus, the 211-residue chain is Protein-methionine-sulfoxide reductase heme-binding subunit MsrQ (211 aa).

Helical transmembrane passes span 17-37 (LAGL…GLGA), 82-102 (LWCF…ELGV), 116-136 (PYLT…FTST), 153-173 (FVYL…KIIS), and 178-198 (IYAG…LSLF).

It belongs to the MsrQ family. Heterodimer of a catalytic subunit (MsrP) and a heme-binding subunit (MsrQ). The cofactor is FMN. Heme b is required as a cofactor.

The protein localises to the cell inner membrane. Part of the MsrPQ system that repairs oxidized periplasmic proteins containing methionine sulfoxide residues (Met-O), using respiratory chain electrons. Thus protects these proteins from oxidative-stress damage caused by reactive species of oxygen and chlorine generated by the host defense mechanisms. MsrPQ is essential for the maintenance of envelope integrity under bleach stress, rescuing a wide series of structurally unrelated periplasmic proteins from methionine oxidation, including the primary periplasmic chaperone SurA and the lipoprotein Pal. MsrQ provides electrons for reduction to the reductase catalytic subunit MsrP, using the quinone pool of the respiratory chain. The polypeptide is Protein-methionine-sulfoxide reductase heme-binding subunit MsrQ (Shigella boydii serotype 4 (strain Sb227)).